Here is a 156-residue protein sequence, read N- to C-terminus: Enhancer of split M1 protein (156 aa).

A signal peptide spans 1 to 19; that stretch reads MMSQTLTLCCLALVACVYG. Kazal-like domains lie at 23–81 and 96–156; these read STND…AWCS and KLEV…EEKC. 5 disulfides stabilise this stretch: cysteine 29/cysteine 62, cysteine 33/cysteine 55, cysteine 102/cysteine 135, cysteine 106/cysteine 128, and cysteine 114/cysteine 156.

The protein is Enhancer of split M1 protein (Kaz-m1) of Drosophila melanogaster (Fruit fly).